Here is a 1023-residue protein sequence, read N- to C-terminus: RTX-I toxin determinant A from serotypes 1/9 (1023 aa).

3 helical membrane-spanning segments follow: residues 226–256 (NNLP…ILSN), 297–326 (STTA…ADKF), and 367–406 (INSV…SGIL). 6 Hemolysin-type calcium-binding repeats span residues 730–747 (FGSR…DDEI), 748–765 (YGND…NDVI), 766–783 (HGGD…NDRL), 784–801 (IGGK…DDEL), 812–829 (LGGA…TNLF), and 830–847 (DGGV…KDIY).

The protein belongs to the RTX prokaryotic toxin (TC 1.C.11) family. Palmitoylated by ApxIC. The toxin only becomes active when modified.

It localises to the secreted. The protein localises to the host cell membrane. In terms of biological role, one of the virulence factors of A.pleuropneumoniae, which has a strong hemolytic activity and is cytotoxic for alveolar macrophages and neutrophils. The protein is RTX-I toxin determinant A from serotypes 1/9 (apxIA) of Actinobacillus pleuropneumoniae (Haemophilus pleuropneumoniae).